Consider the following 283-residue polypeptide: Homeobox-leucine zipper protein HAT2 (283 aa).

A disordered region spans residues 64–134 (VNCEEDTGVS…GETSRKKLRL (71 aa)). Positions 73-84 (SSPNSTISSTIS) are enriched in low complexity. Residues 127–186 (TSRKKLRLSKDQSAFLEETFKEHNTLNPKQKLALAKKLNLTARQVEVWFQNRRARTKLKQ) constitute a DNA-binding region (homeobox). Residues 194 to 215 (LKRCVEKLTEENRRLQKEAMEL) form a leucine-zipper region.

Belongs to the HD-ZIP homeobox family. Class II subfamily. Interacts with RBR1.

Its subcellular location is the nucleus. Functionally, probable transcription factor that plays a role in auxin-mediated morphogenesis. Negatively regulates lateral root elongation. This is Homeobox-leucine zipper protein HAT2 (HAT2) from Arabidopsis thaliana (Mouse-ear cress).